Here is a 102-residue protein sequence, read N- to C-terminus: MKFSKLSLTLALILTQAIFVLCGKINEDFMENGLESHALHDEIRKPIDTEKADAERGVVDCVLNTLGCSSDKDCCGMTPSCTLGICAPSVGGLVGGLLGRAL.

A signal peptide spans 1–23 (MKFSKLSLTLALILTQAIFVLCG). Residues 24 to 56 (KINEDFMENGLESHALHDEIRKPIDTEKADAER) constitute a propeptide that is removed on maturation. Disulfide bonds link Cys-61/Cys-75, Cys-68/Cys-81, and Cys-74/Cys-86. Leu-98 is modified (leucine amide). Positions 100-102 (RAL) are excised as a propeptide.

Belongs to the neurotoxin 15 family. 02 (omega-actx) subfamily. Expressed by the venom gland.

Its subcellular location is the secreted. In terms of biological role, potent inhibitor of insect, but not mammalian, voltage-gated calcium channels (Cav). This Hadronyche infensa (Fraser island funnel-web spider) protein is Omega-hexatoxin-Hi2b.